A 407-amino-acid chain; its full sequence is Tyrosine--tRNA ligase (407 aa).

The short motif at 47 to 56 (PTAPDLHLGA) is the 'HIGH' region element. The short motif at 231–235 (KMSKS) is the 'KMSKS' region element. ATP is bound at residue K234. Positions 342–403 (PRLSQLLVQV…GKRHFARVAL (62 aa)) constitute an S4 RNA-binding domain.

The protein belongs to the class-I aminoacyl-tRNA synthetase family. TyrS type 2 subfamily. Homodimer.

It is found in the cytoplasm. It catalyses the reaction tRNA(Tyr) + L-tyrosine + ATP = L-tyrosyl-tRNA(Tyr) + AMP + diphosphate + H(+). In terms of biological role, catalyzes the attachment of tyrosine to tRNA(Tyr) in a two-step reaction: tyrosine is first activated by ATP to form Tyr-AMP and then transferred to the acceptor end of tRNA(Tyr). The chain is Tyrosine--tRNA ligase from Acidithiobacillus ferrooxidans (Thiobacillus ferrooxidans).